Reading from the N-terminus, the 540-residue chain is Probable protein kinase UbiB (540 aa).

The helical transmembrane segment at 24–44 (LLFDQPLLPWWLASLRLLMPW) threads the bilayer. Residues 126–494 (RFDVEPLASA…RRRQGDRWAL (369 aa)) form the Protein kinase domain. Residues 132-140 (LASASVAQV) and K154 contribute to the ATP site. D289 (proton acceptor) is an active-site residue. The next 2 helical transmembrane spans lie at 496–516 (LLGA…AETA) and 518–538 (LAAP…YLIV).

Belongs to the ABC1 family. UbiB subfamily.

The protein localises to the cell inner membrane. It participates in cofactor biosynthesis; ubiquinone biosynthesis [regulation]. In terms of biological role, is probably a protein kinase regulator of UbiI activity which is involved in aerobic coenzyme Q (ubiquinone) biosynthesis. The protein is Probable protein kinase UbiB of Pseudomonas putida (strain ATCC 700007 / DSM 6899 / JCM 31910 / BCRC 17059 / LMG 24140 / F1).